Here is a 131-residue protein sequence, read N- to C-terminus: Profilin-2 (131 aa).

A disulfide bridge links C13 with C115. Residues 81 to 97 (AVIRGKKGAGGITIKKT) carry the Involved in PIP2 interaction motif. Phosphothreonine is present on T111.

This sequence belongs to the profilin family. As to quaternary structure, occurs in many kinds of cells as a complex with monomeric actin in a 1:1 ratio. In terms of processing, phosphorylated by MAP kinases.

The protein localises to the cytoplasm. The protein resides in the cytoskeleton. Functionally, binds to actin and affects the structure of the cytoskeleton. At high concentrations, profilin prevents the polymerization of actin, whereas it enhances it at low concentrations. By binding to PIP2, it inhibits the formation of IP3 and DG. The sequence is that of Profilin-2 (PRO2) from Phleum pratense (Common timothy).